A 757-amino-acid polypeptide reads, in one-letter code: MSRLFLACLLAIFPVVSMKSPIFGPEEVTSVEGRSVSIKCYYPPTSVNRHTRKYWCRQGAQGRCTTLISSEGYVSDDYVGRANLTNFPESGTFVVDISHLTHKDSGRYKCGLGISSRGLNFDVSLEVSQDPAQASHAHVYTVDLGRTVTINCPFTRANSEKRKSLCKKTIQDCFQVVDSTGYVSNSYKDRAHISILGTNTLVFSVVINRVKLSDAGMYVCQAGDDAKADKINIDLQVLEPEPELVYGDLRSSVTFDCSLGPEVANVPKFLCQKKNGGACNVVINTLGKKAQDFQGRIVSVPKDNGVFSVHITSLRKEDAGRYVCGAQPEGEPQDGWPVQAWQLFVNEETAIPASPSVVKGVRGGSVTVSCPYNPKDANSAKYWCHWEEAQNGRCPRLVESRGLIKEQYEGRLALLTEPGNGTYTVILNQLTDQDTGFYWCVTDGDTRWISTVELKVVQGEPSLKVPKNVTAWLGEPLKLSCHFPCKFYSFEKYWCKWSNRGCSALPTQNDGPSQAFVSCDQNSQVVSLNLDTVTKEDEGWYWCGVKEGPRYGETAAVYVAVESRVKGSQGAKQVKAAPAGAAIQSRAGEIQNKALLDPSFFAKESVKDAAGGPGAPADPGRPTGYSGSSKALVSTLVPLALVLVAGVVAIGVVRARHRKNVDRISIRSYRTDISMSDFENSRDFEGRDNMGASPEAQETSLGGKDEFATTTEDTVESKEPKKAKRSSKEEADEAFTTFLLQAKNLASAATQNGPTEA.

The first 18 residues, 1-18 (MSRLFLACLLAIFPVVSM), serve as a signal peptide directing secretion. Residues 19–126 (KSPIFGPEEV…RGLNFDVSLE (108 aa)) enclose the Ig-like V-type 1; required for binding to polymeric IgA and IgM domain. The Extracellular segment spans residues 19–632 (KSPIFGPEEV…TGYSGSSKAL (614 aa)). Intrachain disulfides connect Cys40-Cys110, Cys56-Cys64, Cys152-Cys220, Cys257-Cys324, Cys271-Cys279, Cys370-Cys440, and Cys384-Cys394. Asn83 is a glycosylation site (N-linked (GlcNAc...) asparagine). 4 consecutive Ig-like V-type domains span residues 145–237 (GRTV…DLQV), 250–341 (RSSV…VQAW), 353–457 (ASPS…LKVV), and 461–560 (PSLK…VYVA). Residues Asn420 and Asn468 are each glycosylated (N-linked (GlcNAc...) asparagine). 3 disulfides stabilise this stretch: Cys481/Cys543, Cys485/Cys519, and Cys495/Cys502. The disordered stretch occupies residues 607–627 (KDAAGGPGAPADPGRPTGYSG). The helical transmembrane segment at 633 to 653 (VSTLVPLALVLVAGVVAIGVV) threads the bilayer. The Cytoplasmic segment spans residues 654–757 (RARHRKNVDR…AATQNGPTEA (104 aa)). A phosphoserine mark is found at Ser665, Ser674, Ser681, and Ser727. Basic and acidic residues predominate over residues 679–688 (ENSRDFEGRD). Positions 679–730 (ENSRDFEGRDNMGASPEAQETSLGGKDEFATTTEDTVESKEPKKAKRSSKEE) are disordered.

As to quaternary structure, interacts (mainly via CDR1-like domain) with dimeric IgA. Interacts (mainly via CDR2-like domain) with pentameric IgM. In terms of assembly, either free or part of the secretory IgA (sIgA) complex that consists of two, four or five IgA monomers, and two additional non-Ig polypeptides, namely the JCHAIN and the secretory component (the proteolytic product of PIGR). Free secretory component interacts with bacterial antigens toxA of C.difficile and eae of E.coli. In terms of processing, in the absence of dimeric IgA, Ser-727 is phosphorylated which allows PIGR to function normally. Post-translationally, N-glycosylated. N-glycosylation is required for anchoring IgA molecules to mucus, but is not necessary for Ig binding. Found in mammary gland, jejunum, lung, kidney and small intestine.

The protein resides in the cell membrane. The protein localises to the secreted. Functionally, mediates selective transcytosis of polymeric IgA and IgM across mucosal epithelial cells. Binds polymeric IgA and IgM at the basolateral surface of epithelial cells. The complex is then transported across the cell to be secreted at the apical surface. During this process, a cleavage occurs that separates the extracellular (known as the secretory component) from the transmembrane segment. In terms of biological role, through its N-linked glycans ensures anchoring of secretory IgA (sIgA) molecules to mucus lining the epithelial surface to neutralize extracellular pathogens. On its own (free form) may act as a non-specific microbial scavenger to prevent pathogen interaction with epithelial cells. This is Polymeric immunoglobulin receptor (PIGR) from Bos taurus (Bovine).